Here is a 503-residue protein sequence, read N- to C-terminus: MSEQNHPQTEPQLDENQIIALRREKLNNIRQQRNAYPNDFKRDSFAADLQAQYGEIGKEELDPQAVPVKIAGRMMLKRQMGKASFATIQDVTGQIQLYLNNKGVSQEVLDGFNHWDLGDIVGAEGTLFKTNHGELTVRVSDIRLLSKSLRPLPDKHKGLSDQETKYRQRYVDLIANEESRNTFIKRSQIIQSVRNFMVGEHYLEVETPMMHPIPGGATAKPFVTHHNALDIPLYLRIAPELYLKRLVVGGLERVFEINRSFRNEGMSVRHNPEFTMIEFYEAFSDYERMMQMAEDIIRNASRTVNGTANITYNGKEVDLESPFERLTILEAIKKYNPHYTDEQLNDAEWLKKEIVKHGESLPPSPGIGSLQLALFEGCAEGKLWNPTFIVDYPVEVSPLARASDTKQGLTERFELFVVGRELANGYSELNDPEDQAERFKSQVAQKDAGDDEAMHYDADYIRAMEFGLPPTGGCGIGIDRLVMLLTDLQTIRDVILFPQMRPE.

Positions 414 and 421 each coordinate Mg(2+).

The protein belongs to the class-II aminoacyl-tRNA synthetase family. As to quaternary structure, homodimer. Mg(2+) serves as cofactor.

The protein localises to the cytoplasm. It catalyses the reaction tRNA(Lys) + L-lysine + ATP = L-lysyl-tRNA(Lys) + AMP + diphosphate. This Neisseria gonorrhoeae (strain NCCP11945) protein is Lysine--tRNA ligase.